The chain runs to 297 residues: Protoheme IX farnesyltransferase (297 aa).

The next 9 helical transmembrane spans lie at 23-43 (VTQL…PGMP), 49-69 (VFGT…NCLI), 93-113 (IQVL…LYHL), 117-137 (LTMW…TVIL), 144-164 (NIVI…AAVA), 171-191 (AWVL…ALAL), 215-235 (RLHI…PYAI), 238-258 (SGAL…WYAW), and 275-295 (FSIL…WVGL).

This sequence belongs to the UbiA prenyltransferase family. Protoheme IX farnesyltransferase subfamily.

The protein localises to the cell inner membrane. The enzyme catalyses heme b + (2E,6E)-farnesyl diphosphate + H2O = Fe(II)-heme o + diphosphate. Its pathway is porphyrin-containing compound metabolism; heme O biosynthesis; heme O from protoheme: step 1/1. Converts heme B (protoheme IX) to heme O by substitution of the vinyl group on carbon 2 of heme B porphyrin ring with a hydroxyethyl farnesyl side group. This is Protoheme IX farnesyltransferase from Bordetella pertussis (strain Tohama I / ATCC BAA-589 / NCTC 13251).